An 85-amino-acid polypeptide reads, in one-letter code: Sec-independent protein translocase protein TatA (85 aa).

The chain crosses the membrane as a helical span at residues 1–21 (MGSMSIWHWLVVGVLVLLLFG). The tract at residues 39 to 85 (FKKGMSEEDEPTQPAEPRPTPRLQQQPPIEPNADPKLQPMQDDRPQH) is disordered.

This sequence belongs to the TatA/E family. The Tat system comprises two distinct complexes: a TatABC complex, containing multiple copies of TatA, TatB and TatC subunits, and a separate TatA complex, containing only TatA subunits. Substrates initially bind to the TatABC complex, which probably triggers association of the separate TatA complex to form the active translocon.

The protein localises to the cell inner membrane. Part of the twin-arginine translocation (Tat) system that transports large folded proteins containing a characteristic twin-arginine motif in their signal peptide across membranes. TatA could form the protein-conducting channel of the Tat system. The chain is Sec-independent protein translocase protein TatA from Rhizorhabdus wittichii (strain DSM 6014 / CCUG 31198 / JCM 15750 / NBRC 105917 / EY 4224 / RW1) (Sphingomonas wittichii).